The following is a 157-amino-acid chain: Protein snakeskin (157 aa).

Residues 2-6 (VSVQT) are Cytoplasmic-facing. A helical transmembrane segment spans residues 7 to 27 (IATIVVKTFKIVLNIIILVLY). Residues 28 to 53 (RTGYNGEFLGVGGTWNLNEEKNPDAE) are Extracellular-facing. A helical membrane pass occupies residues 54–74 (IVASGVIVGYLIYTLVQIVTF). Residues 75 to 87 (LFGTTEHKRALSE) lie on the Cytoplasmic side of the membrane. A helical membrane pass occupies residues 88 to 108 (IVMNFVGVFLWIAVGAVALHY). Over 109 to 130 (WGGYQGEHQFQFVFAEKQVGLA) the chain is Extracellular. Residues 131–151 (VGALCVINGAIYLLDTALSVI) traverse the membrane as a helical segment. The Cytoplasmic portion of the chain corresponds to 152 to 157 (HFTKEM).

As to expression, expressed in midgut epithelium (at protein level).

The protein resides in the apicolateral cell membrane. It is found in the cell junction. It localises to the septate junction. In terms of biological role, required for assembly of smooth septate junctions (sSJs). May be important for barrier function of the midgut epithelium. This Bombyx mori (Silk moth) protein is Protein snakeskin.